The following is a 1281-amino-acid chain: MVRKKHPPLRNVASEGEGQTLEPTATESKVSGKNKELSADQMSENTDQSDVAELNSKEEHSTHGQEPSSSGKKDLQISGLSEKAGFNYESPSKGGSLVSFPHDEVTDRNMLAFSSPAAGGVCEPLKSPQRAEADDPQDMACTPSGDSLETKEEHKMSPKATEETGPVQSGQANCQGLSPVSVASKNPQVPSDGGVRLSKPKGDLLVNDNPDPAPLSPELQDFKCNICGYGYYGNDPTDLIKHFRKYHLGLHNRTRQDAELDSKILALHNMVQFSHSKDFQKVNRSVLSGVLQDISSSRPALLNGTYDVQVTSGGTFIGIGRKTPDCQGNTKYFRCKFCNFTYMGNSSTELEQHFLQTHPNKIKVSLPSSEGVKPSEKNSNKSIPALRASDSGDVGKWQDKMTVKAGDDTPVGYSVPIKPLDSSRQNGTEATSYYWCKFCSFSCESSSSLKLLEHYGKQHGAVQSGGLNPELNDKLPRGSVINQNDLAKSVEGEPLTKPEKGLSGAKKKDFPSKGAEDNMVTSYNCQFCDFRYSKSHGPDVIVVGPLLRHYQQLHNIHKCTIKHCPFCPRGLCSPEKHLGEITYPFACRKSNCSHCALLLLHLSPGVAGSSRVKHQCHQCSFSTPDVDVLLFHYETVHESQASDVKQEANHLLGSDGQQAVRDSKEHSCTKCDFITQVEEEISRHYRRAHSCYKCRQCSFTAADTQSLLEHFNTVHCQEQEITTANGEEGGHAIPTIKEEPKIDLKVYSLLNPDSKMGETVPESIVKREKLDDKEGLKDKIWTESSTDDLRGVAWRGADILRGSPSYTQASLGLLTPVSSSQEQTKTLRDSPNVEAAHLARPMYGLAVDTKGFLQGAPAGSEKSASLTQQYPASGESKTKDESQSLLRRRRGSGVFCANCLTTKTSLWRKNANGGYVCNACGLYQKLHSTPRPLNIIKQNNGEQIIRRRTRKRLNPEALQAEQLNKQQRGSGEEQVNGSPLERRSEDHLSESHPREIPLPSLSKYEAQGSLTKSHSAQQPVLVSQALDIHKRMQPLHIQIKSPQESTGDPGNSSSVSDGKGSSERGSPIEKYMRPAKHPNYSPPGSPIEKYQYPLFGVPFVHNDFQSEADWLRFWSKYKLSVPGNPHYLSHVPGLPNPCQNYVPYPTFNLPPHFSAVGSDNDIPLDLAIKHSRPGPTANGASKEKTKAPPTVKNEDPLNVVKTEKVDRSTQDELSTKCVHCGIVFLDEVMYALHMSCHGDSGPFQCSICQHLCTDKYDFTTHIQRGLHRNNAQAEKNGKPKE.

Disordered stretches follow at residues 1-101 (MVRK…VSFP) and 116-204 (PAAG…KGDL). 2 stretches are compositionally biased toward polar residues: residues 21–31 (LEPTATESKVS) and 40–49 (DQMSENTDQS). Residue lysine 29 forms a Glycyl lysine isopeptide (Lys-Gly) (interchain with G-Cter in SUMO2) linkage. 2 positions are modified to phosphoserine: serine 90 and serine 127. Basic and acidic residues predominate over residues 148 to 162 (LETKEEHKMSPKATE). Polar residues predominate over residues 166–189 (PVQSGQANCQGLSPVSVASKNPQV). Residues serine 178 and serine 216 each carry the phosphoserine modification. The C2H2-type 1; atypical zinc-finger motif lies at 222 to 247 (FKCNICGYGYYGNDPTDLIKHFRKYH). Lysine 263 is covalently cross-linked (Glycyl lysine isopeptide (Lys-Gly) (interchain with G-Cter in SUMO2)). Residues 333–358 (FRCKFCNFTYMGNSSTELEQHFLQTH) form a C2H2-type 2; atypical zinc finger. Residues 365 to 393 (SLPSSEGVKPSEKNSNKSIPALRASDSGD) are disordered. Glycyl lysine isopeptide (Lys-Gly) (interchain with G-Cter in SUMO2) cross-links involve residues lysine 418, lysine 457, lysine 474, and lysine 488. The segment at 484–515 (NDLAKSVEGEPLTKPEKGLSGAKKKDFPSKGA) is disordered. The span at 488–515 (KSVEGEPLTKPEKGLSGAKKKDFPSKGA) shows a compositional bias: basic and acidic residues. Residues 614–637 (HQCHQCSFSTPDVDVLLFHYETVH) form a C2H2-type 3; atypical zinc finger. Residues 635–819 (TVHESQASDV…SLGLLTPVSS (185 aa)) form a mediates interaction with GLI3 region. Lysine 645 is covalently cross-linked (Glycyl lysine isopeptide (Lys-Gly) (interchain with G-Cter in SUMO2)). 2 consecutive C2H2-type zinc fingers follow at residues 666-689 (HSCT…RRAH) and 692-715 (YKCR…NTVH). Glycyl lysine isopeptide (Lys-Gly) (interchain with G-Cter in SUMO2) cross-links involve residues lysine 737 and lysine 755. Residue lysine 766 forms a Glycyl lysine isopeptide (Lys-Gly) (interchain with G-Cter in SUMO1); alternate linkage. Lysine 766 is covalently cross-linked (Glycyl lysine isopeptide (Lys-Gly) (interchain with G-Cter in SUMO2); alternate). Residues lysine 825 and lysine 850 each participate in a glycyl lysine isopeptide (Lys-Gly) (interchain with G-Cter in SUMO2) cross-link. The disordered stretch occupies residues 856-885 (APAGSEKSASLTQQYPASGESKTKDESQSL). The segment covering 862-871 (KSASLTQQYP) has biased composition (polar residues). Glycyl lysine isopeptide (Lys-Gly) (interchain with G-Cter in SUMO2) cross-links involve residues lysine 877 and lysine 879. The GATA-type zinc-finger motif lies at 896-920 (CANCLTTKTSLWRKNANGGYVCNAC). Glycyl lysine isopeptide (Lys-Gly) (interchain with G-Cter in SUMO2) cross-links involve residues lysine 925, lysine 937, and lysine 965. Polar residues predominate over residues 961–977 (EQLNKQQRGSGEEQVNG). Residues 961–1000 (EQLNKQQRGSGEEQVNGSPLERRSEDHLSESHPREIPLPS) are disordered. Phosphoserine is present on serine 978. The span at 980-995 (LERRSEDHLSESHPRE) shows a compositional bias: basic and acidic residues. Residues 985–1184 (EDHLSESHPR…PTANGASKEK (200 aa)) are mediates interaction with RNF4. Glycyl lysine isopeptide (Lys-Gly) (interchain with G-Cter in SUMO2) cross-links involve residues lysine 1003, lysine 1012, lysine 1030, and lysine 1040. Polar residues predominate over residues 1040–1049 (KSPQESTGDP). The disordered stretch occupies residues 1040-1078 (KSPQESTGDPGNSSSVSDGKGSSERGSPIEKYMRPAKHP). Residue serine 1041 is modified to Phosphoserine. Low complexity predominate over residues 1050–1059 (GNSSSVSDGK). The segment covering 1060–1072 (GSSERGSPIEKYM) has biased composition (basic and acidic residues). Serine 1066 is subject to Phosphoserine. Lysine 1070 is covalently cross-linked (Glycyl lysine isopeptide (Lys-Gly) (interchain with G-Cter in SUMO2)). Serine 1085 carries the phosphoserine modification. Positions 1163 to 1281 (PLDLAIKHSR…QAEKNGKPKE (119 aa)) are transcriptional repressor domain. Residues 1169–1195 (KHSRPGPTANGASKEKTKAPPTVKNED) are disordered. Glycyl lysine isopeptide (Lys-Gly) (interchain with G-Cter in SUMO2); alternate cross-links involve residues lysine 1192 and lysine 1201. Residues lysine 1192 and lysine 1201 each participate in a glycyl lysine isopeptide (Lys-Gly) (interchain with G-Cter in SUMO); alternate cross-link. A Glycyl lysine isopeptide (Lys-Gly) (interchain with G-Cter in SUMO1); alternate cross-link involves residue lysine 1201. 2 consecutive C2H2-type zinc fingers follow at residues 1215 to 1237 (TKCV…MSCH) and 1243 to 1267 (FQCS…RGLH).

As to quaternary structure, interacts with RNF4; regulates TRPS1 repressor activity. Interacts specifically with the activator form of GLI3 (GLI3A) but not with the repressor form (GLI3R). In terms of processing, sumoylated. Sumoylation in the repressor domain inhibits the transcription repression activity. Sumoylation on Lys-1201 is the major site. Appears to be sumoylated on multiple sites. In terms of tissue distribution, in the embryo, expression is detected in both visceral and skeletal tissues. Found in the maxilla, mandible, snout, prospective phalanges and in the femoral head within the developing hip. Also expressed in the hair follicles.

The protein localises to the nucleus. Its function is as follows. Transcriptional repressor. Binds specifically to GATA sequences and represses expression of GATA-regulated genes at selected sites and stages in vertebrate development. Regulates chondrocyte proliferation and differentiation. Executes multiple functions in proliferating chondrocytes, expanding the region of distal chondrocytes, activating proliferation in columnar cells and supporting the differentiation of columnar into hypertrophic chondrocytes. This is Zinc finger transcription factor Trps1 (Trps1) from Mus musculus (Mouse).